The primary structure comprises 456 residues: tRNA modification GTPase MnmE (456 aa).

(6S)-5-formyl-5,6,7,8-tetrahydrofolate is bound by residues Arg-23, Glu-80, and Lys-122. Residues 218–380 enclose the TrmE-type G domain; it reads AKRIVIVGPP…LKKHLSNRQK (163 aa). Residue Asn-228 coordinates K(+). GTP is bound by residues 228–233, 247–253, and 272–275; these read NAGKSS, TDLPGTT, and DTAG. Ser-232 is a Mg(2+) binding site. Residues Thr-247, Leu-249, and Thr-252 each coordinate K(+). Mg(2+) is bound at residue Thr-253. Lys-456 contacts (6S)-5-formyl-5,6,7,8-tetrahydrofolate.

Belongs to the TRAFAC class TrmE-Era-EngA-EngB-Septin-like GTPase superfamily. TrmE GTPase family. As to quaternary structure, homodimer. Heterotetramer of two MnmE and two MnmG subunits. Requires K(+) as cofactor.

The protein resides in the cytoplasm. Exhibits a very high intrinsic GTPase hydrolysis rate. Involved in the addition of a carboxymethylaminomethyl (cmnm) group at the wobble position (U34) of certain tRNAs, forming tRNA-cmnm(5)s(2)U34. The protein is tRNA modification GTPase MnmE of Buchnera aphidicola subsp. Schizaphis graminum (strain Sg).